A 67-amino-acid polypeptide reads, in one-letter code: Beta-defensin 123 (67 aa).

The N-terminal stretch at 1 to 20 (MKLLLLTLTVLLLLSQLTPG) is a signal peptide. 3 cysteine pairs are disulfide-bonded: Cys-25–Cys-52, Cys-32–Cys-46, and Cys-36–Cys-53.

This sequence belongs to the beta-defensin family.

It localises to the secreted. Has antibacterial activity. The protein is Beta-defensin 123 (DEFB123) of Gorilla gorilla gorilla (Western lowland gorilla).